The sequence spans 750 residues: Alpha-galactosidase C (750 aa).

Residues 1–26 (MFRSTATVAAATAMGLLTATGHGSLA) form the signal peptide. 8 N-linked (GlcNAc...) asparagine glycosylation sites follow: N58, N162, N186, N194, N366, N428, N432, and N453. Catalysis depends on D511, which acts as the Nucleophile. The active-site Proton donor is the D573.

The protein belongs to the glycosyl hydrolase 36 family. In terms of assembly, homotetramer. It depends on Mg(2+) as a cofactor. The cofactor is NAD(+).

It localises to the secreted. It catalyses the reaction Hydrolysis of terminal, non-reducing alpha-D-galactose residues in alpha-D-galactosides, including galactose oligosaccharides, galactomannans and galactolipids.. Hydrolyzes a variety of simple alpha-D-galactoside as well as more complex molecules such as oligosaccharides and polysaccharides. Active on paranitrophenyl-alpha-galactoside, raffinose, locust bean gum and gum guar. The protein is Alpha-galactosidase C (aglC) of Emericella nidulans (strain FGSC A4 / ATCC 38163 / CBS 112.46 / NRRL 194 / M139) (Aspergillus nidulans).